Here is a 399-residue protein sequence, read N- to C-terminus: Bombesin receptor subtype-3 (399 aa).

The Extracellular portion of the chain corresponds to 1-41 (MAQRQPHSPNQTLISITNDTESSSSVVSNDNTNKGWSGDNS). 2 N-linked (GlcNAc...) asparagine glycosylation sites follow: asparagine 10 and asparagine 18. Residues 42–63 (PGIEALCAIYITYAVIISVGIL) form a helical membrane-spanning segment. Topologically, residues 64–82 (GNAILIKVFFKTKSMQTVP) are cytoplasmic. The helical transmembrane segment at 83 to 103 (NIFITSLAFGDLLLLLTCVPV) threads the bilayer. At 104-121 (DATHYLAEGWLFGRIGCK) the chain is on the extracellular side. A disulfide bridge links cysteine 120 with cysteine 203. A helical transmembrane segment spans residues 122 to 143 (VLSFIRLTSVGVSVFTLTILSA). At 144–163 (DRYKAVVKPLERQPSNAILK) the chain is on the cytoplasmic side. A helical transmembrane segment spans residues 164–184 (TCVKAGCVWIVSMIFALPEAI). The Extracellular portion of the chain corresponds to 185-220 (FSNVYTFRDPNKNMTFESCTSYPVSKKLLQEIHSLL). The helical transmembrane segment at 221-241 (CFLVFYIIPLSIISVYYSLIA) threads the bilayer. The Cytoplasmic segment spans residues 242 to 272 (RTLYKSTLNIPTEEQSHARKQIESRKRIART). Residues 273-293 (VLVLVALFALCWLPNHLLYLY) traverse the membrane as a helical segment. Residues 294–313 (HSFTSQTYVDPSAMHFIFTI) lie on the Extracellular side of the membrane. The helical transmembrane segment at 314–333 (FSRVLAFSNSCVNPFALYWL) threads the bilayer. Residues 334 to 399 (SKSFQKHFKA…CSVKQAEDRF (66 aa)) lie on the Cytoplasmic side of the membrane. Cysteine 347 carries S-palmitoyl cysteine lipidation.

Belongs to the G-protein coupled receptor 1 family. In terms of assembly, interacts with C6orf89. In germ cells in testis. Lung carcinoma cells.

Its subcellular location is the cell membrane. In terms of biological role, role in sperm cell division, maturation, or function. This receptor mediates its action by association with G proteins that activate a phosphatidylinositol-calcium second messenger system. This chain is Bombesin receptor subtype-3 (BRS3), found in Homo sapiens (Human).